A 563-amino-acid polypeptide reads, in one-letter code: Light-independent protochlorophyllide reductase subunit B (563 aa).

D36 contributes to the [4Fe-4S] cluster binding site. The active-site Proton donor is D349. 484–485 (GM) provides a ligand contact to substrate.

The protein belongs to the ChlB/BchB/BchZ family. In terms of assembly, protochlorophyllide reductase is composed of three subunits; ChlL, ChlN and ChlB. Forms a heterotetramer of two ChlB and two ChlN subunits. The cofactor is [4Fe-4S] cluster.

It is found in the plastid. It localises to the chloroplast. The catalysed reaction is chlorophyllide a + oxidized 2[4Fe-4S]-[ferredoxin] + 2 ADP + 2 phosphate = protochlorophyllide a + reduced 2[4Fe-4S]-[ferredoxin] + 2 ATP + 2 H2O. The protein operates within porphyrin-containing compound metabolism; chlorophyll biosynthesis (light-independent). In terms of biological role, component of the dark-operative protochlorophyllide reductase (DPOR) that uses Mg-ATP and reduced ferredoxin to reduce ring D of protochlorophyllide (Pchlide) to form chlorophyllide a (Chlide). This reaction is light-independent. The NB-protein (ChlN-ChlB) is the catalytic component of the complex. This chain is Light-independent protochlorophyllide reductase subunit B, found in Chlamydomonas moewusii (Chlamydomonas eugametos).